The primary structure comprises 125 residues: MPTINQLVRKPRVSEVIKSKSPALENCPQRRGVCTRVYTTTPKKPNSALRKVAKVRLTNGFEVISYIGGEGHNLQEHSVVLIRGGRVKDLPGVRYHIVRGSLDLQGVKDRKQARSKYGAKRPKAA.

Residue aspartate 89 is modified to 3-methylthioaspartic acid.

This sequence belongs to the universal ribosomal protein uS12 family. As to quaternary structure, part of the 30S ribosomal subunit. Contacts proteins S8 and S17. May interact with IF1 in the 30S initiation complex.

Functionally, with S4 and S5 plays an important role in translational accuracy. In terms of biological role, interacts with and stabilizes bases of the 16S rRNA that are involved in tRNA selection in the A site and with the mRNA backbone. Located at the interface of the 30S and 50S subunits, it traverses the body of the 30S subunit contacting proteins on the other side and probably holding the rRNA structure together. The combined cluster of proteins S8, S12 and S17 appears to hold together the shoulder and platform of the 30S subunit. This is Small ribosomal subunit protein uS12 from Cupriavidus pinatubonensis (strain JMP 134 / LMG 1197) (Cupriavidus necator (strain JMP 134)).